A 229-amino-acid polypeptide reads, in one-letter code: NAD(P)H-hydrate epimerase (229 aa).

A YjeF N-terminal domain is found at A10–L217. N60–D64 contributes to the (6S)-NADPHX binding site. Residues N61 and D125 each coordinate K(+). Residues G129–P135 and D158 contribute to the (6S)-NADPHX site. Residue S161 participates in K(+) binding.

Belongs to the NnrE/AIBP family. The cofactor is K(+).

The catalysed reaction is (6R)-NADHX = (6S)-NADHX. It carries out the reaction (6R)-NADPHX = (6S)-NADPHX. Functionally, catalyzes the epimerization of the S- and R-forms of NAD(P)HX, a damaged form of NAD(P)H that is a result of enzymatic or heat-dependent hydration. This is a prerequisite for the S-specific NAD(P)H-hydrate dehydratase to allow the repair of both epimers of NAD(P)HX. This is NAD(P)H-hydrate epimerase from Drosophila virilis (Fruit fly).